Here is a 429-residue protein sequence, read N- to C-terminus: Tubby-like F-box protein 5 (429 aa).

Positions 53–108 constitute an F-box domain; sequence TRWANLPAALLRDVMKKLDESESTWPARKQVVACAGVCKTWRLMCKDIVKSPEFSG. A disordered region spans residues 360–385; sequence QPGSGSDGGALATRPSLSPQQPEQSN. Over residues 374-383 the composition is skewed to polar residues; the sequence is PSLSPQQPEQ.

Belongs to the TUB family. Mostly expressed in roots, flowers and siliques.

The chain is Tubby-like F-box protein 5 from Arabidopsis thaliana (Mouse-ear cress).